A 164-amino-acid polypeptide reads, in one-letter code: HTH-type transcriptional regulator IscR (164 aa).

The 130-residue stretch at 2–131 (RLTSKGRYAV…NNITLGELVN (130 aa)) folds into the HTH rrf2-type domain. A DNA-binding region (H-T-H motif) is located at residues 28–51 (LADISERQGISLSYLEQLFSRLRK). The [2Fe-2S] cluster site is built by Cys-92, Cys-98, and Cys-104.

The cofactor is [2Fe-2S] cluster.

In terms of biological role, regulates the transcription of several operons and genes involved in the biogenesis of Fe-S clusters and Fe-S-containing proteins. This Salmonella agona (strain SL483) protein is HTH-type transcriptional regulator IscR.